We begin with the raw amino-acid sequence, 521 residues long: Protein DETOXIFICATION 44, chloroplastic (521 aa).

Residues 1-31 (MAAVATSFCFSPHRSPSRFGNPNSSIRRTIV) constitute a chloroplast transit peptide. The interval 12–73 (PHRSPSRFGN…DHDHKPDPGI (62 aa)) is disordered. 2 stretches are compositionally biased toward polar residues: residues 18-27 (RFGNPNSSIR) and 42-61 (AVST…TSQN). 12 consecutive transmembrane segments (helical) span residues 80–100 (IMSI…TSLV), 103–123 (AFVG…VSVF), 167–187 (VSTS…ALSL), 213–235 (RLRA…FRGF), 242–262 (LYAV…LIFV), 268–288 (SGAA…LLWK), 314–334 (LLIG…SLAA), 345–365 (QIVL…AIAA), 385–405 (LFGV…VLFI), 423–443 (IALS…LAFV), 454–474 (FGFA…FMLV), and 481–503 (LAGI…AWRL).

This sequence belongs to the multi antimicrobial extrusion (MATE) (TC 2.A.66.1) family. As to expression, expressed in shoots.

Its subcellular location is the plastid. It localises to the chloroplast membrane. The sequence is that of Protein DETOXIFICATION 44, chloroplastic from Arabidopsis thaliana (Mouse-ear cress).